A 910-amino-acid chain; its full sequence is DNA mismatch repair protein MutS (910 aa).

607–614 (GPNMAGKS) contributes to the ATP binding site.

Belongs to the DNA mismatch repair MutS family.

In terms of biological role, this protein is involved in the repair of mismatches in DNA. It is possible that it carries out the mismatch recognition step. This protein has a weak ATPase activity. This chain is DNA mismatch repair protein MutS, found in Geobacillus thermodenitrificans (strain NG80-2).